Here is a 284-residue protein sequence, read N- to C-terminus: Tropomyosin (284 aa).

Residues 1–284 (MDAIKKKMVA…DATFAELAGY (284 aa)) are a coiled coil. Over residues 32–41 (TEEAKAKIED) the composition is skewed to basic and acidic residues. The tract at residues 32–60 (TEEAKAKIEDDYNSLQKKSIQTENDLDNT) is disordered. Residues 44 to 60 (NSLQKKSIQTENDLDNT) are compositionally biased toward polar residues.

The protein belongs to the tropomyosin family. In terms of assembly, homodimer.

Tropomyosin, in association with the troponin complex, plays a central role in the calcium dependent regulation of muscle contraction. This chain is Tropomyosin, found in Mytilus edulis (Blue mussel).